Reading from the N-terminus, the 329-residue chain is Aspartate carbamoyltransferase catalytic subunit (329 aa).

Residues arginine 66 and threonine 67 each coordinate carbamoyl phosphate. Residue lysine 94 participates in L-aspartate binding. Carbamoyl phosphate is bound by residues arginine 116, histidine 149, and glutamine 152. Positions 189 and 243 each coordinate L-aspartate. 2 residues coordinate carbamoyl phosphate: glycine 284 and proline 285.

Belongs to the aspartate/ornithine carbamoyltransferase superfamily. ATCase family. Heterododecamer (2C3:3R2) of six catalytic PyrB chains organized as two trimers (C3), and six regulatory PyrI chains organized as three dimers (R2).

The catalysed reaction is carbamoyl phosphate + L-aspartate = N-carbamoyl-L-aspartate + phosphate + H(+). It participates in pyrimidine metabolism; UMP biosynthesis via de novo pathway; (S)-dihydroorotate from bicarbonate: step 2/3. Functionally, catalyzes the condensation of carbamoyl phosphate and aspartate to form carbamoyl aspartate and inorganic phosphate, the committed step in the de novo pyrimidine nucleotide biosynthesis pathway. This Gloeobacter violaceus (strain ATCC 29082 / PCC 7421) protein is Aspartate carbamoyltransferase catalytic subunit.